We begin with the raw amino-acid sequence, 457 residues long: MSQLNPKVGFVSLGCPKALVDSERILTQLRVEGYDIVPSYDAADVVVVNTCGFIDSAVTESLDAIGEAMNANGKVIVTGCLGKRPEQIREAYPQVLAVSGPQDYQSVMEAVHAALPPRHDPFVDLVPDYGIKLTPRHYAYLKISEGCNHRCSFCIIPSMRGDLVSRPVDEVLREAERLVRGGVKELLVVSQDTSAYGVDLKYAERPWRDRLYQTRMKALCEGLSELGVWTRLHYVYPYPHVDDVIGLMAEGKLLPYLDIPFQHASPRILKLMKRPGAVEKTLERVQRWKAMCPEITVRSTFIVGFPGETDAEFESLLDFLDQAQLDRVGAFAYSPVDGASANALPDQVPEEVKQERLARFMAKQAQISALRLESKIGSVQQCLVDVIEDDIAVARSRADAPEIDGLVHIQNGGELGLKVGDLVDVEITDSDEHDLFGDALPSGHAVQPGRTLNLQIV.

Residues 6–116 form the MTTase N-terminal domain; it reads PKVGFVSLGC…VMEAVHAALP (111 aa). [4Fe-4S] cluster contacts are provided by cysteine 15, cysteine 51, cysteine 80, cysteine 147, cysteine 151, and cysteine 154. The Radical SAM core domain maps to 133 to 371; it reads LTPRHYAYLK…AKQAQISALR (239 aa). The TRAM domain maps to 373–441; sequence ESKIGSVQQC…EHDLFGDALP (69 aa).

It belongs to the methylthiotransferase family. RimO subfamily. [4Fe-4S] cluster is required as a cofactor.

The protein resides in the cytoplasm. It carries out the reaction L-aspartate(89)-[ribosomal protein uS12]-hydrogen + (sulfur carrier)-SH + AH2 + 2 S-adenosyl-L-methionine = 3-methylsulfanyl-L-aspartate(89)-[ribosomal protein uS12]-hydrogen + (sulfur carrier)-H + 5'-deoxyadenosine + L-methionine + A + S-adenosyl-L-homocysteine + 2 H(+). In terms of biological role, catalyzes the methylthiolation of an aspartic acid residue of ribosomal protein uS12. The protein is Ribosomal protein uS12 methylthiotransferase RimO of Xanthomonas axonopodis pv. citri (strain 306).